Reading from the N-terminus, the 949-residue chain is Glycine dehydrogenase (decarboxylating) (949 aa).

The residue at position 697 (K697) is an N6-(pyridoxal phosphate)lysine.

It belongs to the GcvP family. The glycine cleavage system is composed of four proteins: P, T, L and H. Pyridoxal 5'-phosphate serves as cofactor.

It catalyses the reaction N(6)-[(R)-lipoyl]-L-lysyl-[glycine-cleavage complex H protein] + glycine + H(+) = N(6)-[(R)-S(8)-aminomethyldihydrolipoyl]-L-lysyl-[glycine-cleavage complex H protein] + CO2. In terms of biological role, the glycine cleavage system catalyzes the degradation of glycine. The P protein binds the alpha-amino group of glycine through its pyridoxal phosphate cofactor; CO(2) is released and the remaining methylamine moiety is then transferred to the lipoamide cofactor of the H protein. In Deinococcus radiodurans (strain ATCC 13939 / DSM 20539 / JCM 16871 / CCUG 27074 / LMG 4051 / NBRC 15346 / NCIMB 9279 / VKM B-1422 / R1), this protein is Glycine dehydrogenase (decarboxylating).